The primary structure comprises 98 residues: Large ribosomal subunit protein uL23 (98 aa).

The protein belongs to the universal ribosomal protein uL23 family. As to quaternary structure, part of the 50S ribosomal subunit. Contacts protein L29, and trigger factor when it is bound to the ribosome.

Functionally, one of the early assembly proteins it binds 23S rRNA. One of the proteins that surrounds the polypeptide exit tunnel on the outside of the ribosome. Forms the main docking site for trigger factor binding to the ribosome. This Methylobacterium radiotolerans (strain ATCC 27329 / DSM 1819 / JCM 2831 / NBRC 15690 / NCIMB 10815 / 0-1) protein is Large ribosomal subunit protein uL23.